We begin with the raw amino-acid sequence, 346 residues long: D-alanine--D-alanine ligase (346 aa).

One can recognise an ATP-grasp domain in the interval 133-327 (KLYAKSVGVK…ALADQISLEK (195 aa)). Position 159-211 (159-211 (LSFPCIIKPARLGSSIGISIVKDEKDLEYAKDVGFEFDNDLVVEEFKNNIKEY)) interacts with ATP. Mg(2+) contacts are provided by D284, E296, and N298.

This sequence belongs to the D-alanine--D-alanine ligase family. The cofactor is Mg(2+). Mn(2+) is required as a cofactor.

It is found in the cytoplasm. It carries out the reaction 2 D-alanine + ATP = D-alanyl-D-alanine + ADP + phosphate + H(+). Its pathway is cell wall biogenesis; peptidoglycan biosynthesis. In terms of biological role, cell wall formation. This Campylobacter jejuni subsp. jejuni serotype O:2 (strain ATCC 700819 / NCTC 11168) protein is D-alanine--D-alanine ligase.